We begin with the raw amino-acid sequence, 590 residues long: Arginine--tRNA ligase (590 aa).

Residues 138–148 (ANPTGPLHIGH) carry the 'HIGH' region motif.

This sequence belongs to the class-I aminoacyl-tRNA synthetase family. In terms of assembly, monomer.

Its subcellular location is the cytoplasm. The catalysed reaction is tRNA(Arg) + L-arginine + ATP = L-arginyl-tRNA(Arg) + AMP + diphosphate. This is Arginine--tRNA ligase from Orientia tsutsugamushi (strain Ikeda) (Rickettsia tsutsugamushi).